Here is a 316-residue protein sequence, read N- to C-terminus: Ribosomal RNA small subunit methyltransferase H (316 aa).

S-adenosyl-L-methionine is bound by residues 35–37, Asp55, Phe79, Asp101, and Gln108; that span reads GGH.

The protein belongs to the methyltransferase superfamily. RsmH family.

The protein resides in the cytoplasm. It carries out the reaction cytidine(1402) in 16S rRNA + S-adenosyl-L-methionine = N(4)-methylcytidine(1402) in 16S rRNA + S-adenosyl-L-homocysteine + H(+). In terms of biological role, specifically methylates the N4 position of cytidine in position 1402 (C1402) of 16S rRNA. The sequence is that of Ribosomal RNA small subunit methyltransferase H from Vibrio campbellii (strain ATCC BAA-1116).